Reading from the N-terminus, the 113-residue chain is 2Fe-2S ferredoxin (113 aa).

The 103-residue stretch at 2-104 (PKVIFLPNED…DLVVEIPKYN (103 aa)) folds into the 2Fe-2S ferredoxin-type domain. The [2Fe-2S] cluster site is built by Cys42, Cys48, Cys51, and Cys87.

Belongs to the adrenodoxin/putidaredoxin family. [2Fe-2S] cluster serves as cofactor.

Functionally, ferredoxin are iron-sulfur proteins that transfer electrons in a wide variety of metabolic reactions. The chain is 2Fe-2S ferredoxin (fdx) from Haemophilus influenzae (strain ATCC 51907 / DSM 11121 / KW20 / Rd).